Here is a 180-residue protein sequence, read N- to C-terminus: ATP-dependent protease subunit HslV (180 aa).

Thr-5 is an active-site residue. Positions 165, 168, and 171 each coordinate Na(+).

It belongs to the peptidase T1B family. HslV subfamily. A double ring-shaped homohexamer of HslV is capped on each side by a ring-shaped HslU homohexamer. The assembly of the HslU/HslV complex is dependent on binding of ATP.

The protein resides in the cytoplasm. It catalyses the reaction ATP-dependent cleavage of peptide bonds with broad specificity.. With respect to regulation, allosterically activated by HslU binding. In terms of biological role, protease subunit of a proteasome-like degradation complex believed to be a general protein degrading machinery. This is ATP-dependent protease subunit HslV from Helicobacter pylori (strain G27).